Here is a 677-residue protein sequence, read N- to C-terminus: Methionine--tRNA ligase (677 aa).

Residues 15–25 carry the 'HIGH' region motif; that stretch reads PYANGSIHLGH. Residues Cys146, Cys149, Cys159, and Cys162 each coordinate Zn(2+). A 'KMSKS' region motif is present at residues 333-337; sequence KMSKS. ATP is bound at residue Lys336. The tRNA-binding domain maps to 575–677; sequence DFAKVDLRVA…AGAKPGHQVK (103 aa).

This sequence belongs to the class-I aminoacyl-tRNA synthetase family. MetG type 1 subfamily. In terms of assembly, homodimer. Zn(2+) serves as cofactor.

The protein resides in the cytoplasm. The enzyme catalyses tRNA(Met) + L-methionine + ATP = L-methionyl-tRNA(Met) + AMP + diphosphate. Functionally, is required not only for elongation of protein synthesis but also for the initiation of all mRNA translation through initiator tRNA(fMet) aminoacylation. This Shigella flexneri serotype 5b (strain 8401) protein is Methionine--tRNA ligase.